Here is a 1122-residue protein sequence, read N- to C-terminus: MTRAPRCPAVRSLLRSRYREVWPLATFVRRLGPEGRRLVQPGDPKIYRTLVAQCLVCMHWGSQPPPADLSFHQVSSLKELVARVVQRLCERNERNVLAFGFELLNEARGGPPMAFTSSVRSYLPNTVIETLRVSGAWMLLLSRVGDDLLVYLLAHCALYLLVPPSCAYQVCGSPLYQICATTDIWPSVSASYRPTRPVGRNFTNLRFLQQIKSSSRQEAPKPLALPSRGTKRHLSLTSTSVPSAKKARCYPVPRVEEGPHRQVLPTPSGKSWVPSPARSPEVPTAEKDLSSKGKVSDLSLSGSVCCKHKPSSTSLLSPPRQNAFQLRPFIETRHFLYSRGDGQERLNPSFLLSNLQPNLTGARRLVEIIFLGSRPRTSGPLCRTHRLSRRYWQMRPLFQQLLVNHAECQYVRLLRSHCRFRTANQQVTDALNTSPPHLMDLLRLHSSPWQVYGFLRACLCKVVSASLWGTRHNERRFFKNLKKFISLGKYGKLSLQELMWKMKVEDCHWLRSSPGKDRVPAAEHRLRERILATFLFWLMDTYVVQLLRSFFYITESTFQKNRLFFYRKSVWSKLQSIGVRQHLERVRLRELSQEEVRHHQDTWLAMPICRLRFIPKPNGLRPIVNMSYSMGTRALGRRKQAQHFTQRLKTLFSMLNYERTKHPHLMGSSVLGMNDIYRTWRAFVLRVRALDQTPRMYFVKADVTGAYDAIPQGKLVEVVANMIRHSESTYCIRQYAVVRRDSQGQVHKSFRRQVTTLSDLQPYMGQFLKHLQDSDASALRNSVVIEQSISMNESSSSLFDFFLHFLRHSVVKIGDRCYTQCQGIPQGSSLSTLLCSLCFGDMENKLFAEVQRDGLLLRFVDDFLLVTPHLDQAKTFLSTLVHGVPEYGCMINLQKTVVNFPVEPGTLGGAAPYQLPAHCLFPWCGLLLDTQTLEVFCDYSGYAQTSIKTSLTFQSVFKAGKTMRNKLLSVLRLKCHGLFLDLQVNSLQTVCINIYKIFLLQAYRFHACVIQLPFDQRVRKNLTFFLGIISSQASCCYAILKVKNPGMTLKASGSFPPEAAHWLCYQAFLLKLAAHSVIYKCLLGPLRTAQKLLCRKLPEATMTILKAAADPALSTDFQTILD.

The tract at residues 1-239 (MTRAPRCPAV…TKRHLSLTST (239 aa)) is RNA-interacting domain 1. Positions 58–205 (MHWGSQPPPA…RPVGRNFTNL (148 aa)) are GQ motif. The segment at 137–141 (WMLLL) is required for regulating specificity for telomeric DNA and for processivity for primer elongation. The disordered stretch occupies residues 213–296 (SSSRQEAPKP…KDLSSKGKVS (84 aa)). Residues 240–328 (SVPSAKKARC…PRQNAFQLRP (89 aa)) form a linker region. The span at 284–295 (TAEKDLSSKGKV) shows a compositional bias: basic and acidic residues. The interval 306–528 (CKHKPSSTSL…VPAAEHRLRE (223 aa)) is required for oligomerization. Residues 329–540 (FIETRHFLYS…LATFLFWLMD (212 aa)) are RNA-interacting domain 2. A TFLY; involved in RNA binding motif is present at residues 332–337 (TRHFLY). The interval 381 to 511 (LCRTHRLSRR…MKVEDCHWLR (131 aa)) is QFP motif. The CP motif stretch occupies residues 402–422 (LVNHAECQYVRLLRSHCRFRT). Residue Ser447 is modified to Phosphoserine; by DYRK2. The region spanning 595–928 (EVRHHQDTWL…CLFPWCGLLL (334 aa)) is the Reverse transcriptase domain. Tyr697 is subject to Phosphotyrosine; by SRC-type Tyr-kinases. The Mg(2+) site is built by Asp702, Asp861, and Asp862. Positions 907–921 (LGGAAPYQLPAHCLF) are required for oligomerization. Residues 923-927 (WCGLL) are primer grip sequence. Residues 929-1122 (DTQTLEVFCD…LSTDFQTILD (194 aa)) form a CTE region.

Belongs to the reverse transcriptase family. Telomerase subfamily. Catalytic component of the telomerase holoenzyme complex composed of one molecule of TERT, one molecule of WRAP53/TCAB1, two molecules of H/ACA ribonucleoprotein complex subunits DKC1, NOP10, NHP2 and GAR1, and a telomerase RNA template component (TERC). The telomerase holoenzyme complex is associated with TEP1, SMG6/EST1A and POT1. The molecular chaperone HSP90/P23 complex is required for correct assembly and stabilization of the active telomerase. Interacts directly with HSP90A and PTGES3. Interacts with HSPA1A; the interaction occurs in the absence of TERC and dissociates once the complex has formed. Interacts with RAN; the interaction promotes nuclear export of TERT. Interacts with XPO1. Interacts with PTPN11; the interaction retains TERT in the nucleus. Interacts with NCL (via RRM1 and C-terminal RRM4/Arg/Gly-rich domains); the interaction is important for nucleolar localization of TERT. Interacts with SMARCA4 (via the bromodomain); the interaction regulates Wnt-mediated signaling. Interacts with MCRS1 (isoform MCRS2); the interaction inhibits in vitro telomerase activity. Interacts with PIF1; the interaction has no effect on the elongation activity of TERT. Interacts with PML; the interaction recruits TERT to PML bodies and inhibits telomerase activity. Interacts with GNL3L. Interacts with isoform 1 and isoform 2 of NVL. Interacts with DHX36. Interacts with ATF7. Post-translationally, phosphorylation at Tyr-697 under oxidative stress leads to translocation of TERT to the cytoplasm and reduces its antiapoptotic activity. Dephosphorylated by SHP2/PTPN11 leading to nuclear retention. Phosphorylation by the AKT pathway promotes nuclear location. Phosphorylation at the G2/M phase at Ser-447 by DYRK2 promotes ubiquitination by the EDVP complex and degradation. In terms of processing, ubiquitinated by the EDVP complex, a E3 ligase complex following phosphorylation at Ser-447 by DYRK2. Ubiquitinated leads to proteasomal degradation. As to expression, high activity in intestine, liver and testis, moderate in lung, very low in muscle, heart and brain.

The protein localises to the nucleus. It is found in the nucleolus. It localises to the nucleoplasm. The protein resides in the chromosome. Its subcellular location is the telomere. The protein localises to the cytoplasm. It is found in the PML body. The catalysed reaction is DNA(n) + a 2'-deoxyribonucleoside 5'-triphosphate = DNA(n+1) + diphosphate. Its function is as follows. Telomerase is a ribonucleoprotein enzyme essential for the replication of chromosome termini in most eukaryotes. Active in progenitor and cancer cells. Inactive, or very low activity, in normal somatic cells. Catalytic component of the teleromerase holoenzyme complex whose main activity is the elongation of telomeres by acting as a reverse transcriptase that adds simple sequence repeats to chromosome ends by copying a template sequence within the RNA component of the enzyme. Catalyzes the RNA-dependent extension of 3'-chromosomal termini with the 6-nucleotide telomeric repeat unit, 5'-TTAGGG-3'. The catalytic cycle involves primer binding, primer extension and release of product once the template boundary has been reached or nascent product translocation followed by further extension. More active on substrates containing 2 or 3 telomeric repeats. Telomerase activity is regulated by a number of factors including telomerase complex-associated proteins, chaperones and polypeptide modifiers. Modulates Wnt signaling. Plays important roles in aging and antiapoptosis. This chain is Telomerase reverse transcriptase (Tert), found in Mus musculus (Mouse).